A 372-amino-acid chain; its full sequence is Ligninase B (372 aa).

A signal peptide spans 1–21 (MAFKQLFAAISLALSLSAANA). Positions 22-28 (AAVIEKR) are excised as a propeptide. 4 cysteine pairs are disulfide-bonded: C31-C43, C42-C313, C62-C148, and C277-C345. The active-site Proton acceptor is H75. 4 residues coordinate Ca(2+): D76, G94, D96, and S98. H204 provides a ligand contact to heme b. The Ca(2+) site is built by S205, D222, T224, I227, and D229. Residue N285 is glycosylated (N-linked (GlcNAc...) asparagine). Low complexity predominate over residues 350-361 (FPTLTTLPGPET). The disordered stretch occupies residues 350 to 372 (FPTLTTLPGPETSVQRIPPPPGA).

This sequence belongs to the peroxidase family. Ligninase subfamily. Requires heme b as cofactor. Ca(2+) is required as a cofactor.

It carries out the reaction 1-(3,4-dimethoxyphenyl)-2-(2-methoxyphenoxy)propane-1,3-diol + H2O2 = 3,4-dimethoxybenzaldehyde + guaiacol + glycolaldehyde + H2O. The catalysed reaction is 2 (3,4-dimethoxyphenyl)methanol + H2O2 = 2 (3,4-dimethoxyphenyl)methanol radical + 2 H2O. The protein operates within secondary metabolite metabolism; lignin degradation. Functionally, depolymerization of lignin. Catalyzes the C(alpha)-C(beta) cleavage of the propyl side chains of lignin. The protein is Ligninase B (LIPB) of Phanerodontia chrysosporium (White-rot fungus).